Consider the following 337-residue polypeptide: RNA 3'-terminal phosphate cyclase (337 aa).

ATP is bound by residues glutamine 101 and histidine 282–aspartate 285. Catalysis depends on histidine 306, which acts as the Tele-AMP-histidine intermediate.

This sequence belongs to the RNA 3'-terminal cyclase family. Type 1 subfamily.

It is found in the cytoplasm. The catalysed reaction is a 3'-end 3'-phospho-ribonucleotide-RNA + ATP = a 3'-end 2',3'-cyclophospho-ribonucleotide-RNA + AMP + diphosphate. Functionally, catalyzes the conversion of 3'-phosphate to a 2',3'-cyclic phosphodiester at the end of RNA. The mechanism of action of the enzyme occurs in 3 steps: (A) adenylation of the enzyme by ATP; (B) transfer of adenylate to an RNA-N3'P to produce RNA-N3'PP5'A; (C) and attack of the adjacent 2'-hydroxyl on the 3'-phosphorus in the diester linkage to produce the cyclic end product. The biological role of this enzyme is unknown but it is likely to function in some aspects of cellular RNA processing. The sequence is that of RNA 3'-terminal phosphate cyclase from Saccharolobus islandicus (strain M.16.4 / Kamchatka #3) (Sulfolobus islandicus).